Reading from the N-terminus, the 259-residue chain is Transmembrane protein 81 (259 aa).

Positions 1-18 (MALSTLWLVLMLWTSLFS) are cleaved as a signal peptide. Topologically, residues 19-221 (DSQCSTLSQA…KVYSSSTIRN (203 aa)) are extracellular. An Ig-like domain is found at 97 to 172 (GRRLVLDCLE…VLDTGKRRVK (76 aa)). A disulfide bridge connects residues C104 and C161. The chain crosses the membrane as a helical span at residues 222-242 (IVIISVPLSFAIAVVIFIFLF). Topologically, residues 243–259 (CYSRRARRAAHLCQDNI) are cytoplasmic.

In terms of assembly, forms a complex with izumo1 and spaca6 on spermatocyte cell membrane. The complex binds to oocyte protein bncr. Expressed in sperm.

Its subcellular location is the cell membrane. Its function is as follows. Essential fertilization factor required for male fertility. Part of a conserved trimeric sperm complex with the essential fertilization factors IZUMO1 and SPACA6 which bridges sperm and oocyte membranes during fertilization by binding to IZUMO1R/JUNO on the oocyte. The protein is Transmembrane protein 81 of Danio rerio (Zebrafish).